The primary structure comprises 373 residues: MATLFLYSNTFSFFFITLVSLALLILRQPSRAASCTARPVIFNFGDSNSDTGGLVAGLGYPIGFPNGRLFFRRSTGRLSDGRLLIDFLCQSLNTSLLRPYLDSLGRTRFQNGANFAIAGSPTLPKNVPFSLNIQVKQFSHFKSRSLELASSSNSLKGMFISNNGFKNALYMIDIGQNDIARSFARGNSYSQTVKLIPQIITEIKSSIKRLYDEGGRRFWIHNTGPLGCLPQKLSMVKSKDLDQHGCLVSYNSAATLFNQGLDHMCEELRTELRDATIIYIDIYAIKYSLIANSNQYGFKSPLMACCGYGGTPYNYNVKITCGHKGSNVCEEGSRFISWDGIHYTETANAIVAMKVLSMHYSKPPTPFHFFCRR.

An N-terminal signal peptide occupies residues 1 to 32; that stretch reads MATLFLYSNTFSFFFITLVSLALLILRQPSRA. Ser-47 serves as the catalytic Nucleophile. An N-linked (GlcNAc...) asparagine glycan is attached at Asn-93. Residues Asp-339 and His-342 contribute to the active site.

The protein belongs to the 'GDSL' lipolytic enzyme family.

It is found in the secreted. This chain is GDSL esterase/lipase LIP-4 (LIP4), found in Arabidopsis thaliana (Mouse-ear cress).